The following is a 47-amino-acid chain: Photosystem II reaction center protein K (47 aa).

Positions 1 to 10 (MNIGFDMILA) are excised as a propeptide. A helical transmembrane segment spans residues 22–42 (LVDVLPVIPLLFLLLAFVWQA).

This sequence belongs to the PsbK family. PSII is composed of 1 copy each of membrane proteins PsbA, PsbB, PsbC, PsbD, PsbE, PsbF, PsbH, PsbI, PsbJ, PsbK, PsbL, PsbM, PsbT, PsbX, PsbY, PsbZ, Psb30/Ycf12, at least 3 peripheral proteins of the oxygen-evolving complex and a large number of cofactors. It forms dimeric complexes.

The protein localises to the plastid. The protein resides in the chloroplast thylakoid membrane. One of the components of the core complex of photosystem II (PSII). PSII is a light-driven water:plastoquinone oxidoreductase that uses light energy to abstract electrons from H(2)O, generating O(2) and a proton gradient subsequently used for ATP formation. It consists of a core antenna complex that captures photons, and an electron transfer chain that converts photonic excitation into a charge separation. This Mesostigma viride (Green alga) protein is Photosystem II reaction center protein K.